Here is a 491-residue protein sequence, read N- to C-terminus: Probable polygalacturonase (491 aa).

Residues 15–35 form a helical membrane-spanning segment; sequence PIVSFYCFQVVSVLVAVVLLL. 3 N-linked (GlcNAc...) asparagine glycosylation sites follow: N165, N175, and N214. 4 PbH1 repeats span residues 230 to 256, 257 to 278, 319 to 340, and 348 to 369; these read SRNI…NPDS, CTNT…AVKS, IQDV…RIKT, and VKDI…WMTG. Catalysis depends on D271, which acts as the Proton donor. N-linked (GlcNAc...) asparagine glycans are attached at residues N399 and N421.

Belongs to the glycosyl hydrolase 28 family.

It is found in the membrane. The enzyme catalyses (1,4-alpha-D-galacturonosyl)n+m + H2O = (1,4-alpha-D-galacturonosyl)n + (1,4-alpha-D-galacturonosyl)m.. The polypeptide is Probable polygalacturonase (Vitis vinifera (Grape)).